The sequence spans 253 residues: 3-dehydroquinate dehydratase (253 aa).

Residues 46–48 (EFR) and Arg82 contribute to the 3-dehydroquinate site. His143 functions as the Proton donor/acceptor in the catalytic mechanism. Catalysis depends on Lys170, which acts as the Schiff-base intermediate with substrate. Positions 213, 232, and 236 each coordinate 3-dehydroquinate.

The protein belongs to the type-I 3-dehydroquinase family. In terms of assembly, homodimer.

It catalyses the reaction 3-dehydroquinate = 3-dehydroshikimate + H2O. It functions in the pathway metabolic intermediate biosynthesis; chorismate biosynthesis; chorismate from D-erythrose 4-phosphate and phosphoenolpyruvate: step 3/7. Its function is as follows. Involved in the third step of the chorismate pathway, which leads to the biosynthesis of aromatic amino acids. Catalyzes the cis-dehydration of 3-dehydroquinate (DHQ) and introduces the first double bond of the aromatic ring to yield 3-dehydroshikimate. The protein is 3-dehydroquinate dehydratase of Clostridium novyi (strain NT).